The primary structure comprises 343 residues: L-threonine 3-dehydrogenase (343 aa).

Cys39 contacts Zn(2+). Residues Thr41 and His44 each act as charge relay system in the active site. His64, Glu65, Cys94, Cys97, Cys100, and Cys108 together coordinate Zn(2+). Residues Ile176, Asp196, Arg201, 263-265 (LGI), and 287-288 (IY) contribute to the NAD(+) site.

Belongs to the zinc-containing alcohol dehydrogenase family. As to quaternary structure, homotetramer. Requires Zn(2+) as cofactor.

The protein resides in the cytoplasm. It catalyses the reaction L-threonine + NAD(+) = (2S)-2-amino-3-oxobutanoate + NADH + H(+). It participates in amino-acid degradation; L-threonine degradation via oxydo-reductase pathway; glycine from L-threonine: step 1/2. Functionally, catalyzes the NAD(+)-dependent oxidation of L-threonine to 2-amino-3-ketobutyrate. This is L-threonine 3-dehydrogenase from Anaeromyxobacter sp. (strain Fw109-5).